Reading from the N-terminus, the 336-residue chain is DNA-directed RNA polymerase subunit alpha (336 aa).

Positions 1–232 (MIQKNWQELI…DQLGVFVNFD (232 aa)) are alpha N-terminal domain (alpha-NTD). Residues 248-336 (FNPALLKKVD…DLAKRYEDQY (89 aa)) are alpha C-terminal domain (alpha-CTD).

This sequence belongs to the RNA polymerase alpha chain family. In terms of assembly, homodimer. The RNAP catalytic core consists of 2 alpha, 1 beta, 1 beta' and 1 omega subunit. When a sigma factor is associated with the core the holoenzyme is formed, which can initiate transcription.

It catalyses the reaction RNA(n) + a ribonucleoside 5'-triphosphate = RNA(n+1) + diphosphate. In terms of biological role, DNA-dependent RNA polymerase catalyzes the transcription of DNA into RNA using the four ribonucleoside triphosphates as substrates. The chain is DNA-directed RNA polymerase subunit alpha from Rhizobium radiobacter (Agrobacterium tumefaciens).